Reading from the N-terminus, the 147-residue chain is Protein BUD31 homolog (147 aa).

The short motif at 8 to 12 (RRVRK) is the Nuclear localization signal element.

The protein belongs to the BUD31 (G10) family. Identified in the spliceosome C complex.

Its subcellular location is the nucleus. Its function is as follows. Involved in pre-mRNA splicing process. This Caenorhabditis elegans protein is Protein BUD31 homolog.